The following is a 561-amino-acid chain: SUN domain-containing protein 5 (561 aa).

Residues 36 to 56 traverse the membrane as a helical segment; it reads GSFFERSISLVLLLWCFLFLV. Residues 158–318 form the SUN domain; sequence NGSSQLVNNG…SVVEVFGIDA (161 aa). The disordered stretch occupies residues 345–367; the sequence is ADEKQDGEIKSNRTDQIGKETEA. Residues 454-499 are a coiled coil; that stretch reads MEKELRDLELWKTLVASRVESLARGNSALRLDVEKIVKEQANLESK. A run of 2 helical transmembrane segments spans residues 501–521 and 540–560; these read LGVL…LVST and PDSG…IHLL.

Forms homomers. Interacts with SUN3 and TIK.

Its subcellular location is the membrane. In terms of biological role, encodes a member of the mid-SUN subfamily of SUN-domain proteins. It is involved in early seed development and nuclear morphology. [TAIR]. This Arabidopsis thaliana (Mouse-ear cress) protein is SUN domain-containing protein 5.